The sequence spans 192 residues: uncharacterized protein (192 aa).

Residues 29–160 (HRQAAVLIPI…PLDIYRRGDS (132 aa)) enclose the Nudix hydrolase domain. The short motif at 67-89 (GAVDDTDASVIAAALREAEEEVA) is the Nudix box element. Mg(2+)-binding residues include glutamate 83 and glutamate 87.

It belongs to the Nudix hydrolase family. PCD1 subfamily. The cofactor is Mn(2+). Mg(2+) is required as a cofactor.

In terms of biological role, probably mediates the hydrolysis of some nucleoside diphosphate derivatives. This is an uncharacterized protein from Shigella sonnei (strain Ss046).